A 278-amino-acid chain; its full sequence is Sulfur carrier protein FdhD (278 aa).

Cys-124 (cysteine persulfide intermediate) is an active-site residue.

Belongs to the FdhD family.

It localises to the cytoplasm. In terms of biological role, required for formate dehydrogenase (FDH) activity. Acts as a sulfur carrier protein that transfers sulfur from IscS to the molybdenum cofactor prior to its insertion into FDH. The polypeptide is Sulfur carrier protein FdhD (Burkholderia cenocepacia (strain ATCC BAA-245 / DSM 16553 / LMG 16656 / NCTC 13227 / J2315 / CF5610) (Burkholderia cepacia (strain J2315))).